A 450-amino-acid chain; its full sequence is ATP-dependent protease ATPase subunit HslU (450 aa).

ATP is bound by residues Val-27, 69–74 (GVGKTE), Asp-263, Glu-328, and Arg-400.

Belongs to the ClpX chaperone family. HslU subfamily. A double ring-shaped homohexamer of HslV is capped on each side by a ring-shaped HslU homohexamer. The assembly of the HslU/HslV complex is dependent on binding of ATP.

Its subcellular location is the cytoplasm. ATPase subunit of a proteasome-like degradation complex; this subunit has chaperone activity. The binding of ATP and its subsequent hydrolysis by HslU are essential for unfolding of protein substrates subsequently hydrolyzed by HslV. HslU recognizes the N-terminal part of its protein substrates and unfolds these before they are guided to HslV for hydrolysis. In Aquifex aeolicus (strain VF5), this protein is ATP-dependent protease ATPase subunit HslU.